A 119-amino-acid polypeptide reads, in one-letter code: Small ribosomal subunit protein bS16 (119 aa).

The span at 96–107 shows a compositional bias: basic residues; it reads RKKRRAYRQRRS. The disordered stretch occupies residues 96-119; the sequence is RKKRRAYRQRRSTQREEAAKDATK. Residues 108 to 119 are compositionally biased toward basic and acidic residues; that stretch reads TQREEAAKDATK.

Belongs to the bacterial ribosomal protein bS16 family.

This Chlamydia pneumoniae (Chlamydophila pneumoniae) protein is Small ribosomal subunit protein bS16.